The primary structure comprises 162 residues: Nucleotide-binding protein SCO4614 (162 aa).

This sequence belongs to the YajQ family.

The protein localises to the cytoplasm. It is found in the nucleoid. Nucleotide-binding protein. The polypeptide is Nucleotide-binding protein SCO4614 (Streptomyces coelicolor (strain ATCC BAA-471 / A3(2) / M145)).